A 267-amino-acid polypeptide reads, in one-letter code: Large ribosomal subunit protein uL4 (267 aa).

It belongs to the universal ribosomal protein uL4 family. Part of the 50S ribosomal subunit.

One of the primary rRNA binding proteins, this protein initially binds near the 5'-end of the 23S rRNA. It is important during the early stages of 50S assembly. It makes multiple contacts with different domains of the 23S rRNA in the assembled 50S subunit and ribosome. In terms of biological role, forms part of the polypeptide exit tunnel. The polypeptide is Large ribosomal subunit protein uL4 (Saccharolobus solfataricus (strain ATCC 35092 / DSM 1617 / JCM 11322 / P2) (Sulfolobus solfataricus)).